We begin with the raw amino-acid sequence, 512 residues long: Glutamyl-tRNA(Gln) amidotransferase subunit A (512 aa).

Catalysis depends on charge relay system residues lysine 82 and serine 157. Residue serine 181 is the Acyl-ester intermediate of the active site.

Belongs to the amidase family. GatA subfamily. Heterotrimer of A, B and C subunits.

It carries out the reaction L-glutamyl-tRNA(Gln) + L-glutamine + ATP + H2O = L-glutaminyl-tRNA(Gln) + L-glutamate + ADP + phosphate + H(+). Its function is as follows. Allows the formation of correctly charged Gln-tRNA(Gln) through the transamidation of misacylated Glu-tRNA(Gln) in organisms which lack glutaminyl-tRNA synthetase. The reaction takes place in the presence of glutamine and ATP through an activated gamma-phospho-Glu-tRNA(Gln). The polypeptide is Glutamyl-tRNA(Gln) amidotransferase subunit A (Bordetella petrii (strain ATCC BAA-461 / DSM 12804 / CCUG 43448)).